Reading from the N-terminus, the 94-residue chain is Co-chaperonin GroES (94 aa).

It belongs to the GroES chaperonin family. As to quaternary structure, heptamer of 7 subunits arranged in a ring. Interacts with the chaperonin GroEL.

It localises to the cytoplasm. Together with the chaperonin GroEL, plays an essential role in assisting protein folding. The GroEL-GroES system forms a nano-cage that allows encapsulation of the non-native substrate proteins and provides a physical environment optimized to promote and accelerate protein folding. GroES binds to the apical surface of the GroEL ring, thereby capping the opening of the GroEL channel. In Desulfitobacterium hafniense (strain DSM 10664 / DCB-2), this protein is Co-chaperonin GroES.